The chain runs to 2359 residues: Pre-mRNA-processing-splicing factor 8A (2359 aa).

Positions 1-54 (MWNNNDGMPLAPPGTGGSMMPPPPAAHPSYTALPPPSNPTPPVEPTPEEAEAKL) are disordered. Over residues 33 to 45 (LPPPSNPTPPVEP) the composition is skewed to pro residues. Positions 2127 to 2258 (TYIMPKNILK…LTSYKLTQTG (132 aa)) constitute an MPN domain.

As to quaternary structure, interacts with CLO.

It localises to the nucleus. In terms of biological role, functions as a scaffold that mediates the ordered assembly of spliceosomal proteins and snRNAs. Required for the assembly of the U4/U6-U5 tri-snRNP complex. Required for embryo development. Required for splicing efficiency of COOLAIR introns and usage of the proximal poly(A) site. COOLAIR is a set of long non-coding antisense transcripts produced at the FLOWERING LOCUS C (FLC). COOLAIR initiates just downstream of the major sense transcript poly(A) site and terminates either early or extends into the FLC promoter region. Splicing of COOLAIR by PRP8A is functionally important for FLC regulation. The polypeptide is Pre-mRNA-processing-splicing factor 8A (Arabidopsis thaliana (Mouse-ear cress)).